We begin with the raw amino-acid sequence, 474 residues long: Phosphatidylserine synthase 2 (474 aa).

Residues 1–62 (MLRSDVRRVA…DDGTNTFFWR (62 aa)) lie on the Lumenal side of the membrane. A helical membrane pass occupies residues 63–83 (AHTLTVLFILTCSLGYVTLLE). Topologically, residues 84–96 (ETPQDTAYNAKRG) are cytoplasmic. A helical transmembrane segment spans residues 97–117 (IIASILVFLCFGVTQAKDGPF). At 118 to 126 (SRPHPAYWR) the chain is on the lumenal side. The chain crosses the membrane as a helical span at residues 127–147 (FWLCVSVVYELFLIFILFQTV). Topologically, residues 148–313 (HDGRQFMKFI…EWKPASSLRR (166 aa)) are cytoplasmic. Residues 314–334 (WLAVCGIIFVFLLAELNTFYL) traverse the membrane as a helical segment. A topological domain (lumenal) is located at residue lysine 335. The chain crosses the membrane as a helical span at residues 336 to 356 (FVLWMPPEHYLVLLRLVFFVN). Residues 357-376 (VGGVAMREIYDFMDDLKFHK) lie on the Cytoplasmic side of the membrane. A helical membrane pass occupies residues 377 to 397 (KLGQQAWMVAAITVTEFLIVV). Over 398–403 (KYDPYT) the chain is Lumenal. The helical transmembrane segment at 404–424 (ITLPLPFYVTQCWILGIVLVL) threads the bilayer. Topologically, residues 425–474 (TWTVWRFFIRDITLRYKEIRQQKQHRNEEEKSHRNGDVNSEKDTNKHKKH) are cytoplasmic. A compositionally biased stretch (basic and acidic residues) spans 448–468 (QHRNEEEKSHRNGDVNSEKDT). The segment at 448–474 (QHRNEEEKSHRNGDVNSEKDTNKHKKH) is disordered.

It belongs to the phosphatidyl serine synthase family.

It localises to the endoplasmic reticulum membrane. The enzyme catalyses a 1,2-diacyl-sn-glycero-3-phosphoethanolamine + L-serine = a 1,2-diacyl-sn-glycero-3-phospho-L-serine + ethanolamine. It catalyses the reaction 1-hexadecanoyl-2-(9Z-octadecenoyl)-sn-glycero-3-phosphoethanolamine + L-serine = 1-hexadecanoyl-2-(9Z-octadecenoyl)-sn-glycero-3-phospho-L-serine + ethanolamine. It carries out the reaction 1-hexadecanoyl-2-(4Z,7Z,10Z,13Z,16Z,19Z-docosahexaenoyl)-sn-glycero-3-phosphoethanolamine + L-serine = 1-hexadecanoyl-2-(4Z,7Z,10Z,13Z,16Z,19Z-docosahexaenoyl)-sn-glycero-3-phosphoserine + ethanolamine. The catalysed reaction is 1-octadecanoyl-2-(5Z,8Z,11Z,14Z)-eicosatetraenoyl-sn-glycero-3-phosphoethanolamine + L-serine = 1-octadecanoyl-2-(5Z,8Z,11Z,14Z)-eicosatetraenoyl-sn-glycero-3-phosphoserine + ethanolamine. The enzyme catalyses 1-octadecanoyl-2-(4Z,7Z,10Z,13Z,16Z,19Z-docosahexaenoyl)-sn-glycero-3-phosphoethanolamine + L-serine = 1-octadecanoyl-2-(4Z,7Z,10Z,13Z,16Z,19Z-docosahexaenoyl)-sn-glycero-3-phosphoserine + ethanolamine. It catalyses the reaction 1-(1Z-octadecenyl)-2-(4Z,7Z,10Z,13Z,16Z,19Z-docosahexaenoyl)-sn-glycero-3-phosphoethanolamine + L-serine = 1-(1Z-octadecenyl)-2-(4Z,7Z,10Z,13Z,16Z,19Z-docosahexaenoyl)-sn-glycero-3-phospho-L-serine + ethanolamine. It carries out the reaction 1-octadecanoyl-2-(9Z-octadecenoyl)-sn-glycero-3-phosphoethanolamine + L-serine = 1-octadecanoyl-2-(9Z-octadecenoyl)-sn-glycero-3-phospho-L-serine + ethanolamine. The catalysed reaction is 1-(1Z-octadecenyl)-2-(9Z-octadecenoyl)-sn-glycero-3-phosphoethanolamine + L-serine = 1-(1Z-octadecenyl)-2-(9Z-octadecenoyl)-sn-glycero-3-phospho-L-serine + ethanolamine. The enzyme catalyses 1-(1Z-octadecenyl)-2-(5Z,8Z,11Z,14Z- eicosatetraenoyl)-sn-glycero-3-phosphoethanolamine + L-serine = 1-(1Z-octadecenyl)-2-(5Z,8Z,11Z,14Z-eicosatetraenoyl)-sn-glycero-3-phospho-L-serine + ethanolamine. It participates in phospholipid metabolism; phosphatidylserine biosynthesis. In terms of biological role, catalyzes a base-exchange reaction in which the polar head group of phosphatidylethanolamine (PE) or phosphatidylcholine (PC) is replaced by L-serine. Catalyzes the conversion of phosphatatidylethanolamine and does not act on phosphatidylcholine. Can utilize both phosphatidylethanolamine (PE) plasmalogen and diacyl PE as substrate and the latter is six times better utilized, indicating the importance of an ester linkage at the sn-1 position. Although it shows no sn-1 fatty acyl preference, exhibits significant preference towards docosahexaenoic acid (22:6n-3) compared with 18:1 or 20:4 at the sn-2 position. The chain is Phosphatidylserine synthase 2 (ptdss2) from Xenopus tropicalis (Western clawed frog).